An 846-amino-acid polypeptide reads, in one-letter code: DNA mismatch repair protein MutS (846 aa).

610–617 (GPNMGGKS) contacts ATP.

This sequence belongs to the DNA mismatch repair MutS family.

Its function is as follows. This protein is involved in the repair of mismatches in DNA. It is possible that it carries out the mismatch recognition step. This protein has a weak ATPase activity. In Legionella pneumophila (strain Corby), this protein is DNA mismatch repair protein MutS.